We begin with the raw amino-acid sequence, 65 residues long: Large ribosomal subunit protein bL35 (65 aa).

The segment covering 1-15 (MPKMKTKKSASKRFQ) has biased composition (basic residues). A disordered region spans residues 1-27 (MPKMKTKKSASKRFQVRGSGSIKRGQA).

Belongs to the bacterial ribosomal protein bL35 family.

The protein is Large ribosomal subunit protein bL35 of Bordetella petrii (strain ATCC BAA-461 / DSM 12804 / CCUG 43448).